The sequence spans 130 residues: Small ribosomal subunit protein uS9 (130 aa).

It belongs to the universal ribosomal protein uS9 family.

This chain is Small ribosomal subunit protein uS9, found in Buchnera aphidicola subsp. Acyrthosiphon pisum (strain 5A).